The following is a 219-amino-acid chain: Adenylate kinase (219 aa).

Position 10-15 (10-15 (GAGKGT)) interacts with ATP. The interval 30 to 59 (STGDMLRAAVKAETPVGLEAKKVMDAGQLV) is NMP. Residues Thr31, Arg36, 57–59 (QLV), 85–88 (GFPR), and Gln92 contribute to the AMP site. The segment at 122-159 (GRRVHLSSGRTYHVLFNPPKQEGLDDETGEPLVQRADD) is LID. Residues Arg123 and 132 to 133 (TY) each bind ATP. Positions 156 and 167 each coordinate AMP. Gly203 serves as a coordination point for ATP.

Belongs to the adenylate kinase family. As to quaternary structure, monomer.

The protein localises to the cytoplasm. It catalyses the reaction AMP + ATP = 2 ADP. Its pathway is purine metabolism; AMP biosynthesis via salvage pathway; AMP from ADP: step 1/1. In terms of biological role, catalyzes the reversible transfer of the terminal phosphate group between ATP and AMP. Plays an important role in cellular energy homeostasis and in adenine nucleotide metabolism. This chain is Adenylate kinase, found in Chlorobium limicola (strain DSM 245 / NBRC 103803 / 6330).